Consider the following 276-residue polypeptide: 4-hydroxy-tetrahydrodipicolinate reductase (276 aa).

NAD(+) contacts are provided by residues 18–23 and Asp44; that span reads GASGRM. Arg45 serves as a coordination point for NADP(+). Residues 107–109 and 131–134 each bind NAD(+); these read GTT and APNM. The active-site Proton donor/acceptor is the His164. (S)-2,3,4,5-tetrahydrodipicolinate is bound at residue His165. Lys168 functions as the Proton donor in the catalytic mechanism. Residue 174–175 coordinates (S)-2,3,4,5-tetrahydrodipicolinate; sequence GT.

This sequence belongs to the DapB family.

The protein localises to the cytoplasm. It catalyses the reaction (S)-2,3,4,5-tetrahydrodipicolinate + NAD(+) + H2O = (2S,4S)-4-hydroxy-2,3,4,5-tetrahydrodipicolinate + NADH + H(+). It carries out the reaction (S)-2,3,4,5-tetrahydrodipicolinate + NADP(+) + H2O = (2S,4S)-4-hydroxy-2,3,4,5-tetrahydrodipicolinate + NADPH + H(+). The protein operates within amino-acid biosynthesis; L-lysine biosynthesis via DAP pathway; (S)-tetrahydrodipicolinate from L-aspartate: step 4/4. Functionally, catalyzes the conversion of 4-hydroxy-tetrahydrodipicolinate (HTPA) to tetrahydrodipicolinate. In Aromatoleum aromaticum (strain DSM 19018 / LMG 30748 / EbN1) (Azoarcus sp. (strain EbN1)), this protein is 4-hydroxy-tetrahydrodipicolinate reductase.